The chain runs to 257 residues: Pyridoxine 5'-phosphate synthase (257 aa).

N16 serves as a coordination point for 3-amino-2-oxopropyl phosphate. 18-19 contributes to the 1-deoxy-D-xylulose 5-phosphate binding site; sequence DH. R27 contributes to the 3-amino-2-oxopropyl phosphate binding site. H52 functions as the Proton acceptor in the catalytic mechanism. R54 and H59 together coordinate 1-deoxy-D-xylulose 5-phosphate. E79 (proton acceptor) is an active-site residue. Position 109 (T109) interacts with 1-deoxy-D-xylulose 5-phosphate. Catalysis depends on H200, which acts as the Proton donor. 3-amino-2-oxopropyl phosphate contacts are provided by residues G201 and 222 to 223; that span reads GH.

The protein belongs to the PNP synthase family. In terms of assembly, homooctamer; tetramer of dimers.

It is found in the cytoplasm. The enzyme catalyses 3-amino-2-oxopropyl phosphate + 1-deoxy-D-xylulose 5-phosphate = pyridoxine 5'-phosphate + phosphate + 2 H2O + H(+). Its pathway is cofactor biosynthesis; pyridoxine 5'-phosphate biosynthesis; pyridoxine 5'-phosphate from D-erythrose 4-phosphate: step 5/5. Catalyzes the complicated ring closure reaction between the two acyclic compounds 1-deoxy-D-xylulose-5-phosphate (DXP) and 3-amino-2-oxopropyl phosphate (1-amino-acetone-3-phosphate or AAP) to form pyridoxine 5'-phosphate (PNP) and inorganic phosphate. The chain is Pyridoxine 5'-phosphate synthase from Burkholderia pseudomallei (strain K96243).